A 734-amino-acid polypeptide reads, in one-letter code: Putative K(+)-stimulated pyrophosphate-energized sodium pump (734 aa).

The next 5 helical transmembrane spans lie at 3 to 23, 58 to 78, 82 to 102, 134 to 154, and 169 to 189; these read SILF…AYYF, IVGC…YGFH, VWVP…GFLG, VMGL…YLLL, and LCVI…QALF. Lysine 199 lines the substrate pocket. The Mg(2+) site is built by aspartate 202, aspartate 206, asparagine 229, and aspartate 232. Transmembrane regions (helical) follow at residues 244–264, 275–295, 314–334, 336–356, 377–397, 398–418, and 423–443; these read LYES…AAFI, AVIA…IGIF, FGTN…LWLL, LDNW…GIVI, SGKT…MLST, AIPV…ASGF, and VGMG…TLGI. Aspartate 455 provides a ligand contact to Mg(2+). 4 helical membrane-spanning segments follow: residues 491–511, 557–577, 629–649, and 650–670; these read FAIG…IEEI, GMFL…NAVG, ILAP…GLLI, and GGLS…GAWD. Aspartate 670, aspartate 696, and aspartate 700 together coordinate Ca(2+). Lysine 703 provides a ligand contact to substrate. A helical membrane pass occupies residues 712–732; the sequence is ILIKLMSMVAIVMAGLTVAWS.

The protein belongs to the H(+)-translocating pyrophosphatase (TC 3.A.10) family. K(+)-stimulated subfamily. In terms of assembly, homodimer. Mg(2+) is required as a cofactor.

It is found in the cell inner membrane. It catalyses the reaction Na(+)(in) + diphosphate + H2O = Na(+)(out) + 2 phosphate + H(+). Its activity is regulated as follows. Requires K(+) for maximal activity. Sodium pump that utilizes the energy of pyrophosphate hydrolysis as the driving force for Na(+) movement across the membrane. The chain is Putative K(+)-stimulated pyrophosphate-energized sodium pump from Bacteroides thetaiotaomicron (strain ATCC 29148 / DSM 2079 / JCM 5827 / CCUG 10774 / NCTC 10582 / VPI-5482 / E50).